The sequence spans 238 residues: 2-C-methyl-D-erythritol 4-phosphate cytidylyltransferase (238 aa).

The protein belongs to the IspD/TarI cytidylyltransferase family. IspD subfamily.

It catalyses the reaction 2-C-methyl-D-erythritol 4-phosphate + CTP + H(+) = 4-CDP-2-C-methyl-D-erythritol + diphosphate. Its pathway is isoprenoid biosynthesis; isopentenyl diphosphate biosynthesis via DXP pathway; isopentenyl diphosphate from 1-deoxy-D-xylulose 5-phosphate: step 2/6. Functionally, catalyzes the formation of 4-diphosphocytidyl-2-C-methyl-D-erythritol from CTP and 2-C-methyl-D-erythritol 4-phosphate (MEP). The sequence is that of 2-C-methyl-D-erythritol 4-phosphate cytidylyltransferase from Aliivibrio fischeri (strain ATCC 700601 / ES114) (Vibrio fischeri).